The following is a 728-amino-acid chain: MSSRIDRDVINALIAGHFADPFSVLGMHQTQAGLEVRALLPDATDVWVIEPKTGRKVGKLECLDARGFFCGVLPRRKNFFRYQLAVTWHGQQNLIDDPYRFGPLIQEMDAWLLSEGTHLRPYETLGAHADTMDGVTGTRFSVWAPNARRVSVVGQFNYWDGRRHPMRLRKESGIWELFIPGAHNGQLYKFELLDANGNLRIKADPYAFEAQMRPETASMICGLPEKVTPSEERQKANQFDAPISIYEVHLGSWRRHTDNNFWLSYRELADQLVPYAKWMGFTHLELLPVNEHPFDGSWGYQPTGLYAPTRRFGTRDDFRYFINAAHAAGLNVILDWVPGHFPSDEFSLAEFDGTHLYEHSDPREGYHQDWNTLIYNYGRREVSNYLVGNALYWMERFGIDALRVDAVASMIYRDYSRKEGEWIPNEFGGRENLEAIEFLRNTNRIIGEQVPGAVSMAEESTDFSGVTRPPETGGLGFWYKWNLGWMHDTLDYMKLDPVYRQYHHDKLTFGMLYNHTENFVLPLSHDEVVHGKKSILDRMPGDAWQKFANLRAYYGWMWAFPGKKLLFMGNEFAQGREWNHDASLDWHLLEGGDNWHHGVQRLVRDLNHTYRHHKALHELDFDAYGFEWLVVDDNERSVLIFVRRDKAGNEIIVASNFTPVPRHDYRFGINQPGRWREILNTDSMHYHGSNTGNGGVVHSDEIESHGRQHSLNLTLPPLATIWLMREGE.

Asp405 (nucleophile) is an active-site residue. The active-site Proton donor is the Glu458.

It belongs to the glycosyl hydrolase 13 family. GlgB subfamily. As to quaternary structure, monomer.

The enzyme catalyses Transfers a segment of a (1-&gt;4)-alpha-D-glucan chain to a primary hydroxy group in a similar glucan chain.. It functions in the pathway glycan biosynthesis; glycogen biosynthesis. Functionally, catalyzes the formation of the alpha-1,6-glucosidic linkages in glycogen by scission of a 1,4-alpha-linked oligosaccharide from growing alpha-1,4-glucan chains and the subsequent attachment of the oligosaccharide to the alpha-1,6 position. The polypeptide is 1,4-alpha-glucan branching enzyme GlgB (Salmonella typhi).